A 141-amino-acid chain; its full sequence is D-aminoacyl-tRNA deacylase (141 aa).

Residues 133-134 (GP) carry the Gly-cisPro motif, important for rejection of L-amino acids motif.

Belongs to the DTD family. As to quaternary structure, homodimer.

Its subcellular location is the cytoplasm. The catalysed reaction is glycyl-tRNA(Ala) + H2O = tRNA(Ala) + glycine + H(+). It carries out the reaction a D-aminoacyl-tRNA + H2O = a tRNA + a D-alpha-amino acid + H(+). An aminoacyl-tRNA editing enzyme that deacylates mischarged D-aminoacyl-tRNAs. Also deacylates mischarged glycyl-tRNA(Ala), protecting cells against glycine mischarging by AlaRS. Acts via tRNA-based rather than protein-based catalysis; rejects L-amino acids rather than detecting D-amino acids in the active site. By recycling D-aminoacyl-tRNA to D-amino acids and free tRNA molecules, this enzyme counteracts the toxicity associated with the formation of D-aminoacyl-tRNA entities in vivo and helps enforce protein L-homochirality. The polypeptide is D-aminoacyl-tRNA deacylase (Thermobifida fusca (strain YX)).